The chain runs to 272 residues: Anamorsin homolog (272 aa).

Positions 1 to 156 (MDSMMNQKTV…KIGSSFALKK (156 aa)) are N-terminal SAM-like domain. The interval 157 to 185 (PVTNLFKIDLDDDVDLIDEDSLLTEEDLM) is linker. The [2Fe-2S] cluster site is built by C195, C202, C205, and C207. A fe-S binding site A region spans residues 195–207 (CETTKKACKNCVC). 4 residues coordinate [4Fe-4S] cluster: C233, C236, C244, and C247. Short sequence motifs (cx2C motif) lie at residues 233–236 (CGSC) and 244–247 (CGTC). Residues 233–247 (CGSCGLGDAFRCGTC) are fe-S binding site B.

The protein belongs to the anamorsin family. As to quaternary structure, monomer. Interacts with ATR3. The cofactor is [2Fe-2S] cluster. It depends on [4Fe-4S] cluster as a cofactor.

It localises to the cytoplasm. The protein resides in the mitochondrion intermembrane space. In terms of biological role, component of the cytosolic iron-sulfur (Fe-S) protein assembly (CIA) machinery. Required for the maturation of extramitochondrial Fe-S proteins. Part of an electron transfer chain functioning in an early step of cytosolic Fe-S biogenesis, facilitating the de novo assembly of a [4Fe-4S] cluster on the cytosolic Fe-S scaffold complex. Electrons are transferred from NADPH via FAD- and FMN-containing diflavin oxidoreductase TAH18/ATR3. Together with the diflavin oxidoreductase, also required for the assembly of the diferric tyrosyl radical cofactor of ribonucleotide reductase (RNR), probably by providing electrons for reduction during radical cofactor maturation in the catalytic small subunit. Required for embryo development. The protein is Anamorsin homolog of Arabidopsis thaliana (Mouse-ear cress).